Consider the following 459-residue polypeptide: U1 small nuclear ribonucleoprotein 70 kDa (459 aa).

Residues 99–178 (KTIFVSRISY…RRIVVDIERG (80 aa)) form the RRM domain. The disordered stretch occupies residues 185–459 (KPRKFGGGLG…YSMISNENGF (275 aa)). Positions 211-241 (EMSESREKEKEREKEKEKEKERMEKMKKRDG) are enriched in basic and acidic residues. Residues 242 to 254 (GLSSNGNRSNGIS) show a composition bias toward low complexity. Basic and acidic residues predominate over residues 263-408 (DRGDRGDRDR…IDERRRDQRD (146 aa)). Over residues 426–440 (QHHHHQQNHQSHHNQ) the composition is skewed to basic residues.

It localises to the nucleus. In terms of biological role, mediates the splicing of pre-mRNA by binding to the stem loop I region of U1-snRNA. This chain is U1 small nuclear ribonucleoprotein 70 kDa (snrnp70), found in Dictyostelium discoideum (Social amoeba).